The following is a 589-amino-acid chain: Guanylate-binding protein 1 (589 aa).

The segment at 1–309 (MASEIHMSEP…SAICSGELPC (309 aa)) is GTPase domain (Globular). Residues 35-276 (TQPVVVVAIV…FTSYIFSYSG (242 aa)) form the GB1/RHD3-type G domain. GTP is bound by residues 47-53 (YRTGKSY), 67-69 (LGS), and 97-101 (DTEGL). The residue at position 156 (Ser-156) is a Phosphoserine. At Cys-586 the chain carries Cysteine methyl ester. Cys-586 carries the S-farnesyl cysteine lipid modification. Cys-586 carries S-geranylgeranyl cysteine; partial lipidation. The residue at position 587 (Thr-587) is a Phosphothreonine. A propeptide spans 587–589 (TIL) (removed in mature form).

This sequence belongs to the TRAFAC class dynamin-like GTPase superfamily. GB1/RHD3 GTPase family. GB1 subfamily. As to quaternary structure, homodimer; homodimerization occurs upon GTP-binding and is required for the second hydrolysis step from GDP to GMP. Undergoes conformational changes and oligomerization upon GTP-binding and hydrolysis. Heterodimer with other family members, including GBP2, GBP3, GBP4 and GBP5. Dimerization regulates subcellular location to membranous structures. Interacts with SQSTM1. Interacts (when phosphorylated) with 14-3-3 protein sigma (SFN); leading to GBP1 retention in the cytosol and inactivation. Post-translationally, isoprenylation of mouse GBP1 is incomplete. It persistently exists in the cell as a mixture of C20-modified and (more predominantly) unmodified form. Isoprenylation is required for proper subcellular location. In terms of processing, phosphorylated at Ser-156 by PIM1 in absence of infection, inhibits GBP1: phosphorylation promotes interaction with 14-3-3 protein sigma (SFN), leading to GBP1 retention in the cytosol. Dephosphorylated in response to infection, liberating GBP1.

It is found in the cytoplasmic vesicle membrane. The protein localises to the golgi apparatus membrane. It localises to the cell membrane. The protein resides in the cytoplasm. Its subcellular location is the cytosol. It is found in the secreted. It carries out the reaction GTP + H2O = GDP + phosphate + H(+). It catalyses the reaction GDP + H2O = GMP + phosphate + H(+). In terms of biological role, interferon (IFN)-inducible GTPase that plays important roles in innate immunity against a diverse range of bacterial, viral and protozoan pathogens. Hydrolyzes GTP to GMP in two consecutive cleavage reactions: GTP is first hydrolyzed to GDP and then to GMP in a processive manner. Following infection, recruited to the pathogen-containing vacuoles or vacuole-escaped bacteria and promotes both inflammasome assembly and autophagy. Acts as a positive regulator of inflammasome assembly by facilitating the detection of inflammasome ligands from pathogens. Involved in the lysis of pathogen-containing vacuoles, releasing pathogens into the cytosol. Following pathogen release in the cytosol, forms a protein coat in a GTPase-dependent manner that encapsulates pathogens and promotes the detection of ligands by pattern recognition receptors. Plays a key role in inflammasome assembly in response to infection by Gram-negative bacteria: following pathogen release in the cytosol, forms a protein coat that encapsulates Gram-negative bacteria and directly binds to lipopolysaccharide (LPS), disrupting the O-antigen barrier and unmasking lipid A that is that detected by the non-canonical inflammasome effector CASP4/CASP11. Also promotes recruitment of proteins that mediate bacterial cytolysis, leading to release double-stranded DNA (dsDNA) that activates the AIM2 inflammasome. Involved in autophagy by regulating bacteriolytic peptide generation via its interaction with ubiquitin-binding protein SQSTM1, which delivers monoubiquitinated proteins to autolysosomes for the generation of bacteriolytic peptides. Confers protection to several pathogens, including the bacterial pathogens L.monocytogenes and M.bovis BCG as well as the protozoan pathogen T.gondii. Exhibits antiviral activity against influenza virus. The polypeptide is Guanylate-binding protein 1 (Gbp1) (Mus musculus (Mouse)).